Consider the following 387-residue polypeptide: Patatin-11 (387 aa).

A signal peptide spans Met-1 to Ala-23. Residues Leu-32–Leu-230 form the PNPLA domain. The short motif at Gly-36–Gly-41 is the GXGXXG element. Residues Gly-75–Gly-79 carry the GXSXG motif. Ser-77 functions as the Nucleophile in the catalytic mechanism. A glycan (N-linked (GlcNAc...) asparagine) is linked at Asn-115. Asp-216 serves as the catalytic Proton acceptor. The DGA/G motif lies at Asp-216–Gly-218. The stretch at Glu-322–Ala-385 forms a coiled coil. Asn-326 carries an N-linked (GlcNAc...) asparagine glycan.

The protein belongs to the patatin family. In terms of tissue distribution, tuber.

It is found in the vacuole. Functionally, probable lipolytic acyl hydrolase (LAH), an activity which is thought to be involved in the response of tubers to pathogens. The polypeptide is Patatin-11 (Solanum tuberosum (Potato)).